A 684-amino-acid polypeptide reads, in one-letter code: Methionine--tRNA ligase (684 aa).

The 'HIGH' region signature appears at 15 to 25 (PYANGAIHLGH). Residues C146, C149, C159, and C162 each contribute to the Zn(2+) site. The 'KMSKS' region motif lies at 331 to 335 (KMSKS). Residue K334 coordinates ATP. The tRNA-binding domain occupies 582–684 (DFAKLDLRVA…SGVTAGMQVR (103 aa)).

The protein belongs to the class-I aminoacyl-tRNA synthetase family. MetG type 1 subfamily. As to quaternary structure, homodimer. Zn(2+) serves as cofactor.

The protein localises to the cytoplasm. It carries out the reaction tRNA(Met) + L-methionine + ATP = L-methionyl-tRNA(Met) + AMP + diphosphate. Is required not only for elongation of protein synthesis but also for the initiation of all mRNA translation through initiator tRNA(fMet) aminoacylation. This Glaesserella parasuis serovar 5 (strain SH0165) (Haemophilus parasuis) protein is Methionine--tRNA ligase.